The primary structure comprises 155 residues: uncharacterized protein (155 aa).

The first 23 residues, 1-23, serve as a signal peptide directing secretion; that stretch reads MKIRSLSRFVLASTMFASFTASA.

This sequence to E.coli YkfB.

This is an uncharacterized protein from Escherichia coli (strain K12).